An 82-amino-acid polypeptide reads, in one-letter code: Omega-ctenitoxin-Pn1a (82 aa).

The N-terminal stretch at 1-21 (MWLKIQVFLLAITLITLGIQA) is a signal peptide. The propeptide occupies 22 to 37 (EPNSSPNNPLIEEEAR). Cystine bridges form between Cys-39–Cys-54, Cys-46–Cys-59, Cys-53–Cys-70, and Cys-61–Cys-68. The propeptide occupies 72 to 82 (KKFIEFFGGGK).

Belongs to the neurotoxin 02 (plectoxin) family. As to expression, expressed by the venom gland.

It is found in the secreted. Its function is as follows. Antagonist of L-type calcium channels (Cav1/CACNA1). Induces immediate clockwise gyration and flaccid paralysis after 6 hours at dose levels of 5 ug per mouse. The polypeptide is Omega-ctenitoxin-Pn1a (Phoneutria nigriventer (Brazilian armed spider)).